The chain runs to 338 residues: Tetraacyldisaccharide 4'-kinase (338 aa).

Position 53–60 (53–60 (TVGGSGKT)) interacts with ATP.

It belongs to the LpxK family.

The catalysed reaction is a lipid A disaccharide + ATP = a lipid IVA + ADP + H(+). Its pathway is glycolipid biosynthesis; lipid IV(A) biosynthesis; lipid IV(A) from (3R)-3-hydroxytetradecanoyl-[acyl-carrier-protein] and UDP-N-acetyl-alpha-D-glucosamine: step 6/6. In terms of biological role, transfers the gamma-phosphate of ATP to the 4'-position of a tetraacyldisaccharide 1-phosphate intermediate (termed DS-1-P) to form tetraacyldisaccharide 1,4'-bis-phosphate (lipid IVA). The chain is Tetraacyldisaccharide 4'-kinase from Azorhizobium caulinodans (strain ATCC 43989 / DSM 5975 / JCM 20966 / LMG 6465 / NBRC 14845 / NCIMB 13405 / ORS 571).